A 278-amino-acid polypeptide reads, in one-letter code: Tryptophan synthase alpha chain (278 aa).

Catalysis depends on proton acceptor residues E50 and D61.

The protein belongs to the TrpA family. As to quaternary structure, tetramer of two alpha and two beta chains.

The enzyme catalyses (1S,2R)-1-C-(indol-3-yl)glycerol 3-phosphate + L-serine = D-glyceraldehyde 3-phosphate + L-tryptophan + H2O. It functions in the pathway amino-acid biosynthesis; L-tryptophan biosynthesis; L-tryptophan from chorismate: step 5/5. The alpha subunit is responsible for the aldol cleavage of indoleglycerol phosphate to indole and glyceraldehyde 3-phosphate. The chain is Tryptophan synthase alpha chain from Methylobacterium nodulans (strain LMG 21967 / CNCM I-2342 / ORS 2060).